A 543-amino-acid polypeptide reads, in one-letter code: Protein MGF 505-10R (543 aa).

The protein belongs to the asfivirus MGF 505 family.

Its function is as follows. Plays a role in virus cell tropism, and may be required for efficient virus replication in macrophages. The chain is Protein MGF 505-10R from African swine fever virus (isolate Warthog/Namibia/Wart80/1980) (ASFV).